We begin with the raw amino-acid sequence, 98 residues long: Large ribosomal subunit protein uL23 (98 aa).

The protein belongs to the universal ribosomal protein uL23 family. In terms of assembly, part of the 50S ribosomal subunit. Contacts protein L29, and trigger factor when it is bound to the ribosome.

Its function is as follows. One of the early assembly proteins it binds 23S rRNA. One of the proteins that surrounds the polypeptide exit tunnel on the outside of the ribosome. Forms the main docking site for trigger factor binding to the ribosome. The polypeptide is Large ribosomal subunit protein uL23 (Bordetella bronchiseptica (strain ATCC BAA-588 / NCTC 13252 / RB50) (Alcaligenes bronchisepticus)).